The following is a 217-amino-acid chain: tRNA (guanine-N(7)-)-methyltransferase (217 aa).

Glutamate 48, glutamate 73, asparagine 100, and aspartate 123 together coordinate S-adenosyl-L-methionine. The active site involves aspartate 123. Lysine 127 and aspartate 159 together coordinate substrate.

Belongs to the class I-like SAM-binding methyltransferase superfamily. TrmB family.

It carries out the reaction guanosine(46) in tRNA + S-adenosyl-L-methionine = N(7)-methylguanosine(46) in tRNA + S-adenosyl-L-homocysteine. Its pathway is tRNA modification; N(7)-methylguanine-tRNA biosynthesis. Catalyzes the formation of N(7)-methylguanine at position 46 (m7G46) in tRNA. This is tRNA (guanine-N(7)-)-methyltransferase from Leptospira interrogans serogroup Icterohaemorrhagiae serovar Lai (strain 56601).